We begin with the raw amino-acid sequence, 582 residues long: Aspartate--tRNA ligase (582 aa).

An L-aspartate-binding site is contributed by Glu-174. Positions 198-201 (QITK) are aspartate. Arg-220 contributes to the L-aspartate binding site. ATP contacts are provided by residues 220 to 222 (RDE) and Gln-229. Residue His-443 participates in L-aspartate binding. Glu-477 lines the ATP pocket. Arg-484 serves as a coordination point for L-aspartate. Residue 529 to 532 (GLDR) coordinates ATP.

The protein belongs to the class-II aminoacyl-tRNA synthetase family. Type 1 subfamily. Homodimer.

The protein localises to the cytoplasm. It catalyses the reaction tRNA(Asp) + L-aspartate + ATP = L-aspartyl-tRNA(Asp) + AMP + diphosphate. Its function is as follows. Catalyzes the attachment of L-aspartate to tRNA(Asp) in a two-step reaction: L-aspartate is first activated by ATP to form Asp-AMP and then transferred to the acceptor end of tRNA(Asp). This chain is Aspartate--tRNA ligase, found in Streptococcus pyogenes serotype M5 (strain Manfredo).